The sequence spans 139 residues: ATP synthase epsilon chain (139 aa).

The protein belongs to the ATPase epsilon chain family. As to quaternary structure, F-type ATPases have 2 components, CF(1) - the catalytic core - and CF(0) - the membrane proton channel. CF(1) has five subunits: alpha(3), beta(3), gamma(1), delta(1), epsilon(1). CF(0) has three main subunits: a, b and c.

Its subcellular location is the cell membrane. Its function is as follows. Produces ATP from ADP in the presence of a proton gradient across the membrane. The protein is ATP synthase epsilon chain of Roseiflexus sp. (strain RS-1).